The primary structure comprises 354 residues: UDP-N-acetylglucosamine--N-acetylmuramyl-(pentapeptide) pyrophosphoryl-undecaprenol N-acetylglucosamine transferase (354 aa).

UDP-N-acetyl-alpha-D-glucosamine contacts are provided by residues 15 to 17, Asn127, Arg163, Ser191, Ile244, 263 to 268, and Gln288; these read TGG and ALTVSE.

This sequence belongs to the glycosyltransferase 28 family. MurG subfamily.

The protein localises to the cell inner membrane. The catalysed reaction is di-trans,octa-cis-undecaprenyl diphospho-N-acetyl-alpha-D-muramoyl-L-alanyl-D-glutamyl-meso-2,6-diaminopimeloyl-D-alanyl-D-alanine + UDP-N-acetyl-alpha-D-glucosamine = di-trans,octa-cis-undecaprenyl diphospho-[N-acetyl-alpha-D-glucosaminyl-(1-&gt;4)]-N-acetyl-alpha-D-muramoyl-L-alanyl-D-glutamyl-meso-2,6-diaminopimeloyl-D-alanyl-D-alanine + UDP + H(+). It participates in cell wall biogenesis; peptidoglycan biosynthesis. In terms of biological role, cell wall formation. Catalyzes the transfer of a GlcNAc subunit on undecaprenyl-pyrophosphoryl-MurNAc-pentapeptide (lipid intermediate I) to form undecaprenyl-pyrophosphoryl-MurNAc-(pentapeptide)GlcNAc (lipid intermediate II). The chain is UDP-N-acetylglucosamine--N-acetylmuramyl-(pentapeptide) pyrophosphoryl-undecaprenol N-acetylglucosamine transferase from Serratia proteamaculans (strain 568).